We begin with the raw amino-acid sequence, 347 residues long: uncharacterized protein (347 aa).

At 1-44 the chain is on the cytoplasmic side; it reads MWNPKKKSEALAKFKSFPYPKPGTSNVLDSKEGDTRRKYFTKTH. Residues 45–62 traverse the membrane as a helical; Signal-anchor for type II membrane protein segment; sequence LHRLFVFVVLLLCSGYFL. Residues 63 to 347 are Lumenal-facing; sequence KHTLLTRPKE…RGWRKLVPFL (285 aa).

It belongs to the glycosyltransferase 34 family.

The protein resides in the endoplasmic reticulum membrane. This is an uncharacterized protein from Schizosaccharomyces pombe (strain 972 / ATCC 24843) (Fission yeast).